Consider the following 728-residue polypeptide: Putative auxin response factor 20 (728 aa).

Residues 119–233 (FFEKQLSPAD…ELLVGVRRAP (115 aa)) constitute a DNA-binding region (TF-B3 1). 2 stretches are compositionally biased toward low complexity: residues 665–689 (PQGSDEEAAAATTSTAHAGDATTSA) and 700–712 (ASSSSSSAPIIPS). The disordered stretch occupies residues 665–728 (PQGSDEEAAA…IVNPRDGSQG (64 aa)).

The protein belongs to the ARF family. Homo and heterodimers.

The protein resides in the nucleus. In terms of biological role, auxin response factors (ARFs) are transcriptional factors that bind specifically to the DNA sequence 5'-TGTCTC-3' found in the auxin-responsive promoter elements (AuxREs). This chain is Putative auxin response factor 20 (ARF20), found in Oryza sativa subsp. japonica (Rice).